The sequence spans 374 residues: Protein RecA (374 aa).

66 to 73 contributes to the ATP binding site; it reads GPESSGKT. The segment at 326–374 is disordered; that stretch reads KLGVGVHPEESATEPGADAASAAPADAAPAVPAPTTAKATKSKATAAKS. Residues 338-374 are compositionally biased toward low complexity; that stretch reads TEPGADAASAAPADAAPAVPAPTTAKATKSKATAAKS.

The protein belongs to the RecA family.

Its subcellular location is the cytoplasm. Functionally, can catalyze the hydrolysis of ATP in the presence of single-stranded DNA, the ATP-dependent uptake of single-stranded DNA by duplex DNA, and the ATP-dependent hybridization of homologous single-stranded DNAs. It interacts with LexA causing its activation and leading to its autocatalytic cleavage. The protein is Protein RecA of Streptomyces coelicolor (strain ATCC BAA-471 / A3(2) / M145).